Reading from the N-terminus, the 68-residue chain is Conotoxin mr3g (68 aa).

The N-terminal stretch at 1–19 is a signal peptide; the sequence is MSKLGVLLTICLLLFALTA. Positions 20 to 51 are excised as a propeptide; that stretch reads VPLDGDQPADRPAERMQDDISSERHPMFDAVR. 3 disulfides stabilise this stretch: Cys-53/Cys-67, Cys-54/Cys-63, and Cys-59/Cys-66. Residues Pro-55 and Pro-65 each carry the 4-hydroxyproline modification. Residue Cys-67 is modified to Cysteine amide.

In terms of tissue distribution, expressed by the venom duct.

The protein resides in the secreted. Its function is as follows. Intracranially injection into mice does not elicit symptoms. The polypeptide is Conotoxin mr3g (Conus marmoreus (Marble cone)).